A 521-amino-acid chain; its full sequence is Na(+)/H(+) antiporter ApNhaP (521 aa).

Over 1–18 the chain is Periplasmic; that stretch reads MTIEAAMGEEAIKENLEQ. A helical transmembrane segment spans residues 19–39; sequence FLIVLSVSLGVATLSQISSFF. Residues 40-41 are Cytoplasmic-facing; the sequence is RQ. The helical transmembrane segment at 42–62 threads the bilayer; it reads IPYTLLLVIVGLGLAFVDIRL. Residues 63–94 are Periplasmic-facing; the sequence is VNLSPELILEIFLPPLLFEAAWNIRWRNLKKN. A helical transmembrane segment spans residues 95 to 115; sequence LFPVVLLAIIGVVISVVGIGF. At 116 to 126 the chain is on the cytoplasmic side; that stretch reads SLNYFSGLSLP. Residues 127–147 form a helical membrane-spanning segment; sequence IALLVGAILAATDPVSVIALF. Topologically, residues 148 to 164 are periplasmic; sequence RELGVGERLTVLMEGES. The chain crosses the membrane as a helical span at residues 165–185; that stretch reads LFNDGVAVVAFSLLVGIPLGT. Over 186–194 the chain is Cytoplasmic; it reads QEFSVTNTL. A helical transmembrane segment spans residues 195–215; sequence IQFVTLQGIGIGCGGVIGFGI. Topologically, residues 216-245 are periplasmic; sequence SYLTQRFDLPLVEQSLTLVSAYGTYLITEE. Residues 246–266 form a helical membrane-spanning segment; that stretch reads LGGSGVIGVVTVGLILGNFGS. Over 267-276 the chain is Cytoplasmic; that stretch reads RIGMNPRTRL. Residues 277–297 traverse the membrane as a helical segment; that stretch reads LVSEFWEFIAFFVNSIVFLLI. The Periplasmic segment spans residues 298–311; that stretch reads GDQINIRGLADNGQ. Residues 312 to 332 traverse the membrane as a helical segment; the sequence is LILITIIALVIIRAISIYGLG. Residues 333-349 are Cytoplasmic-facing; sequence TISNLITKQDISWQEET. The chain crosses the membrane as a helical span at residues 350 to 370; sequence VLWWGGLRGSVSIALALSVPV. Over 371–380 the chain is Periplasmic; that stretch reads MLDGRQDIIE. The chain crosses the membrane as a helical span at residues 381–401; sequence AVFGVVLFTLLVQGLTMQTVI. The Cytoplasmic portion of the chain corresponds to 402–521; the sequence is EKLGLIGDRA…LLQEVLAKPE (120 aa).

It belongs to the monovalent cation:proton antiporter 1 (CPA1) transporter (TC 2.A.36) family.

It localises to the cell inner membrane. Its function is as follows. Na(+)/H(+) antiporter that extrudes sodium in exchange for external protons. Also shows high Ca(2+)/H(+) antiporter activity at alkaline pH. Does not catalyze exchange between Li(+) and H(+). The protein is Na(+)/H(+) antiporter ApNhaP (apnhaP) of Aphanothece halophytica.